The chain runs to 74 residues: Small ribosomal subunit protein bS18 (74 aa).

The protein belongs to the bacterial ribosomal protein bS18 family. Part of the 30S ribosomal subunit. Forms a tight heterodimer with protein bS6.

Binds as a heterodimer with protein bS6 to the central domain of the 16S rRNA, where it helps stabilize the platform of the 30S subunit. The protein is Small ribosomal subunit protein bS18 of Zymomonas mobilis subsp. mobilis (strain ATCC 31821 / ZM4 / CP4).